The following is a 444-amino-acid chain: N-succinylarginine dihydrolase (444 aa).

Residues 19–28 (AGLSFGNVAS), asparagine 110, and 137–138 (HR) each bind substrate. Glutamate 174 is a catalytic residue. Arginine 214 is a binding site for substrate. Histidine 250 is a catalytic residue. Substrate is bound by residues aspartate 252 and asparagine 362. The active-site Nucleophile is the cysteine 368.

The protein belongs to the succinylarginine dihydrolase family. As to quaternary structure, homodimer.

It catalyses the reaction N(2)-succinyl-L-arginine + 2 H2O + 2 H(+) = N(2)-succinyl-L-ornithine + 2 NH4(+) + CO2. Its pathway is amino-acid degradation; L-arginine degradation via AST pathway; L-glutamate and succinate from L-arginine: step 2/5. In terms of biological role, catalyzes the hydrolysis of N(2)-succinylarginine into N(2)-succinylornithine, ammonia and CO(2). This chain is N-succinylarginine dihydrolase, found in Shewanella denitrificans (strain OS217 / ATCC BAA-1090 / DSM 15013).